The sequence spans 496 residues: Glutamyl-tRNA(Gln) amidotransferase subunit A (496 aa).

Catalysis depends on charge relay system residues Lys-79 and Ser-159. Ser-183 acts as the Acyl-ester intermediate in catalysis.

Belongs to the amidase family. GatA subfamily. In terms of assembly, heterotrimer of A, B and C subunits.

It carries out the reaction L-glutamyl-tRNA(Gln) + L-glutamine + ATP + H2O = L-glutaminyl-tRNA(Gln) + L-glutamate + ADP + phosphate + H(+). Functionally, allows the formation of correctly charged Gln-tRNA(Gln) through the transamidation of misacylated Glu-tRNA(Gln) in organisms which lack glutaminyl-tRNA synthetase. The reaction takes place in the presence of glutamine and ATP through an activated gamma-phospho-Glu-tRNA(Gln). This is Glutamyl-tRNA(Gln) amidotransferase subunit A from Bartonella quintana (strain Toulouse) (Rochalimaea quintana).